Here is a 357-residue protein sequence, read N- to C-terminus: MPPSLSHLFLLSTFASLALCSFYCKNPGYPCLNGGTCLYNGECNCTSGFRGFNCGLDSSTISAACTVECHNKGICFNGDKCYCTKDYMGPTCQQAYDFADCNKSSMKIKAYRPTEFNGEIFLMQSMFGCKLTEVTSTIPGYKQYELDVPHDSTGPCKLKKTIDATTGDVHFEVNVSTIHHAGQFGMYDGLKTVSCHYSSRDQAIVKDVTNHELLVSVTTSDGNTQNIQEIQTNDVIHLTFNPVNLPGGYKGVKILDLEMYSVQWNEVNSILLLKDQCMTQKADELGYSVSNEVDGYSGRAILKAIPLFENVQASVYFNYRLRFCRNRCKIKSCPSQSPKPMPMGEIFKHQGQGIRIV.

Positions 1-20 (MPPSLSHLFLLSTFASLALC) are cleaved as a signal peptide. EGF-like domains are found at residues 21–55 (SFYCKNPGYPCLNGGTCLYNGECNCTSGFRGFNCG) and 61–93 (ISAACTVECHNKGICFNGDKCYCTKDYMGPTCQ). Disulfide bonds link Cys24–Cys37, Cys31–Cys43, Cys45–Cys54, Cys65–Cys75, Cys69–Cys81, and Cys83–Cys92.

As to expression, prismatic layer of shell (at protein level). Expressed primarily in the mantle with highest level in the mantle edge and lower level in the mantle pallium.

The protein resides in the secreted. The chain is EGF-like domain-containing protein 2 from Pinctada maxima (Silver-lipped pearl oyster).